We begin with the raw amino-acid sequence, 367 residues long: Protein RecA (367 aa).

Residues 1 to 14 show a composition bias toward polar residues; it reads MSTEVNANQSPNAE. Residues 1–24 form a disordered region; the sequence is MSTEVNANQSPNAESRQEAARSGE. Residues 15-24 show a composition bias toward basic and acidic residues; the sequence is SRQEAARSGE. 84-91 serves as a coordination point for ATP; that stretch reads GPESSGKT. Residues 348 to 367 form a disordered region; it reads GSEVSSNSMRPLTTANRKAA. Polar residues predominate over residues 349–367; it reads SEVSSNSMRPLTTANRKAA.

Belongs to the RecA family.

The protein resides in the cytoplasm. Its function is as follows. Can catalyze the hydrolysis of ATP in the presence of single-stranded DNA, the ATP-dependent uptake of single-stranded DNA by duplex DNA, and the ATP-dependent hybridization of homologous single-stranded DNAs. It interacts with LexA causing its activation and leading to its autocatalytic cleavage. The chain is Protein RecA from Prochlorococcus marinus (strain MIT 9211).